A 333-amino-acid chain; its full sequence is Quinolinate synthase (333 aa).

Iminosuccinate contacts are provided by His-41 and Ser-58. Position 103 (Cys-103) interacts with [4Fe-4S] cluster. Residues 129–131 (YIN) and Ser-146 contribute to the iminosuccinate site. Cys-189 contributes to the [4Fe-4S] cluster binding site. Residues 215 to 217 (HPE) and Thr-232 each bind iminosuccinate. Residue Cys-282 coordinates [4Fe-4S] cluster.

Belongs to the quinolinate synthase family. Type 2 subfamily. It depends on [4Fe-4S] cluster as a cofactor.

The protein localises to the cytoplasm. The enzyme catalyses iminosuccinate + dihydroxyacetone phosphate = quinolinate + phosphate + 2 H2O + H(+). Its pathway is cofactor biosynthesis; NAD(+) biosynthesis; quinolinate from iminoaspartate: step 1/1. Functionally, catalyzes the condensation of iminoaspartate with dihydroxyacetone phosphate to form quinolinate. This chain is Quinolinate synthase, found in Prochlorococcus marinus (strain MIT 9303).